The primary structure comprises 754 residues: 1,4-alpha-glucan branching enzyme GlgB (754 aa).

Asp431 serves as the catalytic Nucleophile. The Proton donor role is filled by Glu484.

It belongs to the glycosyl hydrolase 13 family. GlgB subfamily. As to quaternary structure, monomer.

It carries out the reaction Transfers a segment of a (1-&gt;4)-alpha-D-glucan chain to a primary hydroxy group in a similar glucan chain.. The protein operates within glycan biosynthesis; glycogen biosynthesis. Catalyzes the formation of the alpha-1,6-glucosidic linkages in glycogen by scission of a 1,4-alpha-linked oligosaccharide from growing alpha-1,4-glucan chains and the subsequent attachment of the oligosaccharide to the alpha-1,6 position. The sequence is that of 1,4-alpha-glucan branching enzyme GlgB from Prochlorococcus marinus (strain MIT 9301).